The primary structure comprises 190 residues: Abscisic acid receptor PYL2 (190 aa).

Residues 28–182 form an START-like region; the sequence is FEPDPTTCTS…NLQKLGVAAT (155 aa). Residues Lys64, 93 to 98, 120 to 126, and Glu147 contribute to the abscisate site; these read ASTSTE and RLKNYKS. The Gate loop motif lies at 89-93; the sequence is SGLPA. Residues 119 to 121 carry the Latch loop motif; the sequence is HRL.

This sequence belongs to the PYR/PYL/RCAR abscisic acid intracellular receptor family. Homodimer. Binds ABA on one subunit only. Interacts with HAB1, ABI1 and ABI2, and possibly with other PP2Cs. Binds to CARs protein in an ABA-independent manner, both at the plasma membrane and in the nucleus.

It is found in the cytoplasm. It localises to the nucleus. The protein localises to the cell membrane. Receptor for abscisic acid (ABA) required for ABA-mediated responses such as stomatal closure and germination inhibition. Inhibits the activity of group-A protein phosphatases type 2C (PP2Cs) when activated by ABA. Can be activated by both (-)-ABA and (+)-ABA. The protein is Abscisic acid receptor PYL2 (PYL2) of Arabidopsis thaliana (Mouse-ear cress).